The following is a 222-amino-acid chain: Phosphoribosylformylglycinamidine synthase subunit PurQ (222 aa).

The region spanning 3-222 (SAVVLLPGLN…LFEGALGIAA (220 aa)) is the Glutamine amidotransferase type-1 domain. Cys-86 acts as the Nucleophile in catalysis. Residues His-196 and Glu-198 contribute to the active site.

As to quaternary structure, part of the FGAM synthase complex composed of 1 PurL, 1 PurQ and 2 PurS subunits.

It localises to the cytoplasm. It catalyses the reaction N(2)-formyl-N(1)-(5-phospho-beta-D-ribosyl)glycinamide + L-glutamine + ATP + H2O = 2-formamido-N(1)-(5-O-phospho-beta-D-ribosyl)acetamidine + L-glutamate + ADP + phosphate + H(+). The enzyme catalyses L-glutamine + H2O = L-glutamate + NH4(+). It functions in the pathway purine metabolism; IMP biosynthesis via de novo pathway; 5-amino-1-(5-phospho-D-ribosyl)imidazole from N(2)-formyl-N(1)-(5-phospho-D-ribosyl)glycinamide: step 1/2. Functionally, part of the phosphoribosylformylglycinamidine synthase complex involved in the purines biosynthetic pathway. Catalyzes the ATP-dependent conversion of formylglycinamide ribonucleotide (FGAR) and glutamine to yield formylglycinamidine ribonucleotide (FGAM) and glutamate. The FGAM synthase complex is composed of three subunits. PurQ produces an ammonia molecule by converting glutamine to glutamate. PurL transfers the ammonia molecule to FGAR to form FGAM in an ATP-dependent manner. PurS interacts with PurQ and PurL and is thought to assist in the transfer of the ammonia molecule from PurQ to PurL. This is Phosphoribosylformylglycinamidine synthase subunit PurQ from Mesorhizobium japonicum (strain LMG 29417 / CECT 9101 / MAFF 303099) (Mesorhizobium loti (strain MAFF 303099)).